We begin with the raw amino-acid sequence, 301 residues long: Cell division control protein 2 homolog 1 (301 aa).

Residues 5-297 form the Protein kinase domain; the sequence is YERLQKIGEG…AAQALEHPYF (293 aa). ATP contacts are provided by residues 11-19 and Lys-34; that span reads IGEGSYGVV. Ser-15 bears the Phosphoserine mark. Residue Tyr-16 is modified to Phosphotyrosine. Residue Asp-127 is the Proton acceptor of the active site. At Thr-160 the chain carries Phosphothreonine; by CAK.

It belongs to the protein kinase superfamily. CMGC Ser/Thr protein kinase family. CDC2/CDKX subfamily. In terms of assembly, forms a stable but non-covalent complex with a regulatory subunit and with a cyclin.

It carries out the reaction L-seryl-[protein] + ATP = O-phospho-L-seryl-[protein] + ADP + H(+). The catalysed reaction is L-threonyl-[protein] + ATP = O-phospho-L-threonyl-[protein] + ADP + H(+). Phosphorylation at Ser-15 or Tyr-16 inactivates the enzyme, while phosphorylation at Thr-160 activates it. Functionally, probably involved in the control of the cell cycle. The protein is Cell division control protein 2 homolog 1 (CRK1) of Trypanosoma brucei brucei.